Here is a 739-residue protein sequence, read N- to C-terminus: MQTLFLSLLAAAVTVHAYGSGGSNWDQAYSRAKDALQKLNQTEKVGLVTGVKWMGGPCVGNTYKPESIDYPSLCLQDSPLGIRFANPVTAFPAGINAGATWDTQLLYARGAAMGAEAKGLGIHVQLGPVAGPLGKNPNGGRNWEGFSVDPYLSGVAMEKTIRGMQDSGVQACAKHWLGNEQEHYRDTISSNIGDRAAHELYVWPFMDAVKAGVASVMCSYNKVNGTWACESDALNNKLMKEELGFPGYIMSDWNAQHSTVNSAVSGLDMTMPGSDFSNPPGSIFWGSNLEAAVADGSVPQSRLDDMVTRILAAWYLVGQDQGYPPVAFSSWNGGKANVDVTADHGTVARAVARDSIVLLKNGHGTLPLRKPKSLAIVGSDAIVNPAGPNACSDRGCNNGTLAMGWGSGTAEFPYLVGPLDAIQKRAAADGTKIVPSTTDDPTAGASAAAAAETAIVFINSDSGEGYITVEGNLGDRNNLDPWHNGNELVKAVAAASKNVIVVIHSVGPIILETILAQPSVKAIVWAGLPGQESGNALVDVIYGDTTPSGKLPYTIAKQAADYGASWINAETDDFPEGLYVDYRHFDAKGIAPRYEFGYGLSYTTFKYSGLWVNMDASAGAANGQVVPGGPADLFEVVGQVSVSVRNNGRVAGAEVAQLYLGLPDSAPATPPKQLRGFQKLMLQPGQTGRATFKLTRRDLSYWDVQQQKWVVPSGTFKVYVGSSSRDIREEGSFRVRRGW.

An N-terminal signal peptide occupies residues M1–A17. N-linked (GlcNAc...) asparagine glycosylation is found at N40 and N224. Residue D252 is part of the active site. N-linked (GlcNAc...) asparagine glycosylation occurs at N398.

This sequence belongs to the glycosyl hydrolase 3 family.

It localises to the secreted. It catalyses the reaction Hydrolysis of terminal, non-reducing beta-D-glucosyl residues with release of beta-D-glucose.. It participates in glycan metabolism; cellulose degradation. Its function is as follows. Beta-glucosidases are one of a number of cellulolytic enzymes involved in the degradation of cellulosic biomass. Catalyzes the last step releasing glucose from the inhibitory cellobiose. The protein is Probable beta-glucosidase L (bglL) of Aspergillus fumigatus (strain CBS 144.89 / FGSC A1163 / CEA10) (Neosartorya fumigata).